The sequence spans 122 residues: NADH-quinone oxidoreductase subunit A (122 aa).

A run of 3 helical transmembrane segments spans residues 12–32 (ILLF…AGWL), 67–87 (IAIL…WAVV), and 91–111 (IGWF…VGFI).

This sequence belongs to the complex I subunit 3 family. NDH-1 is composed of 14 different subunits. Subunits NuoA, H, J, K, L, M, N constitute the membrane sector of the complex.

The protein resides in the cell inner membrane. The enzyme catalyses a quinone + NADH + 5 H(+)(in) = a quinol + NAD(+) + 4 H(+)(out). NDH-1 shuttles electrons from NADH, via FMN and iron-sulfur (Fe-S) centers, to quinones in the respiratory chain. The immediate electron acceptor for the enzyme in this species is believed to be ubiquinone. Couples the redox reaction to proton translocation (for every two electrons transferred, four hydrogen ions are translocated across the cytoplasmic membrane), and thus conserves the redox energy in a proton gradient. The chain is NADH-quinone oxidoreductase subunit A from Nitrosomonas europaea (strain ATCC 19718 / CIP 103999 / KCTC 2705 / NBRC 14298).